The following is a 500-amino-acid chain: MTIFDNYEVWFVIGSQHLYGPEALRQVTKHAEHVVNSLNAEAKLPCKLVLKPLGTTPDEITHICRDANYDDKCAGLVVWLHTFSPAKMWINGLTILNKPLLQFHTQYNAALPWDSIDMDFMNLNQTAHGGREFGFIGARMRQQHSVVTGHWQDKEAHQRIGGWMRQAVSKQDTRHLKVCRFGDNMREVAVTDGDKVAAQIKFGFSVNTWAVGDLVQVVNSISDGDISALVDEYESSYRLTPAAQVHGEKRQNVLDAARIELGMKRFLEQGGFHAFTTTFEDLHGLKQLPGLAVQRLMQQGYGFAGEGDWKTAALLRIMKVMSTGLQGGTSFMEDYTYHFDNGNDLVLGSHMLEVCPTIATAEKPILDVQPLGIGGKADPARLIFNTQTGPAIVASLIDLGDRFRLLVNTIETVPTPHDLPKLPVANALWKAQPDLRTASEAWIIAGGAHHTVFSHALNLDDMRQFAELHNIELTVIDNDTRLPSFKDALRWNEVYYSSKR.

Mn(2+) is bound by residues E306, E333, H350, and H450.

The protein belongs to the arabinose isomerase family. In terms of assembly, homohexamer. Requires Mn(2+) as cofactor.

It carries out the reaction beta-L-arabinopyranose = L-ribulose. The protein operates within carbohydrate degradation; L-arabinose degradation via L-ribulose; D-xylulose 5-phosphate from L-arabinose (bacterial route): step 1/3. In terms of biological role, catalyzes the conversion of L-arabinose to L-ribulose. This chain is L-arabinose isomerase, found in Klebsiella pneumoniae (strain 342).